The primary structure comprises 338 residues: Ketol-acid reductoisomerase (NADP(+)) (338 aa).

The 181-residue stretch at 1–181 (MKVFYDKDAD…GGGKAGIIET (181 aa)) folds into the KARI N-terminal Rossmann domain. NADP(+) is bound by residues 24–27 (YGSQ), Arg-47, and Ser-52. Residue His-107 is part of the active site. Residue Gly-133 coordinates NADP(+). Residues 182 to 327 (NFREETETDL…EKLRAMMPWI (146 aa)) form the KARI C-terminal knotted domain. 4 residues coordinate Mg(2+): Asp-190, Glu-194, Glu-226, and Glu-230. Position 251 (Ser-251) interacts with substrate.

The protein belongs to the ketol-acid reductoisomerase family. The cofactor is Mg(2+).

The enzyme catalyses (2R)-2,3-dihydroxy-3-methylbutanoate + NADP(+) = (2S)-2-acetolactate + NADPH + H(+). It catalyses the reaction (2R,3R)-2,3-dihydroxy-3-methylpentanoate + NADP(+) = (S)-2-ethyl-2-hydroxy-3-oxobutanoate + NADPH + H(+). It participates in amino-acid biosynthesis; L-isoleucine biosynthesis; L-isoleucine from 2-oxobutanoate: step 2/4. It functions in the pathway amino-acid biosynthesis; L-valine biosynthesis; L-valine from pyruvate: step 2/4. In terms of biological role, involved in the biosynthesis of branched-chain amino acids (BCAA). Catalyzes an alkyl-migration followed by a ketol-acid reduction of (S)-2-acetolactate (S2AL) to yield (R)-2,3-dihydroxy-isovalerate. In the isomerase reaction, S2AL is rearranged via a Mg-dependent methyl migration to produce 3-hydroxy-3-methyl-2-ketobutyrate (HMKB). In the reductase reaction, this 2-ketoacid undergoes a metal-dependent reduction by NADPH to yield (R)-2,3-dihydroxy-isovalerate. This Leptothrix cholodnii (strain ATCC 51168 / LMG 8142 / SP-6) (Leptothrix discophora (strain SP-6)) protein is Ketol-acid reductoisomerase (NADP(+)).